Here is a 227-residue protein sequence, read N- to C-terminus: PKHD-type hydroxylase ABSDF3031 (227 aa).

Residues 78–178 (KIIPPLFNRY…RFASFFWVQS (101 aa)) enclose the Fe2OG dioxygenase domain. Histidine 96, aspartate 98, and histidine 159 together coordinate Fe cation. Position 169 (arginine 169) interacts with 2-oxoglutarate.

Fe(2+) serves as cofactor. It depends on L-ascorbate as a cofactor.

The chain is PKHD-type hydroxylase ABSDF3031 from Acinetobacter baumannii (strain SDF).